Consider the following 257-residue polypeptide: Ribonuclease HII (257 aa).

Residues 72–257 (TYIAGIDEVG…FAPIKDMIQK (186 aa)) enclose the RNase H type-2 domain. The a divalent metal cation site is built by Asp-78, Glu-79, and Asp-170.

The protein belongs to the RNase HII family. The cofactor is Mn(2+). Mg(2+) serves as cofactor.

It is found in the cytoplasm. It catalyses the reaction Endonucleolytic cleavage to 5'-phosphomonoester.. Functionally, endonuclease that specifically degrades the RNA of RNA-DNA hybrids. This chain is Ribonuclease HII, found in Bacillus cereus (strain ATCC 10987 / NRS 248).